Reading from the N-terminus, the 33-residue chain is Zinc metalloproteinase-disintegrin-like moojenin (33 aa).

Residues 8–33 enclose the Disintegrin domain; sequence PPVCGNELLEVGEECDCGTPENCQNE. Ca(2+) is bound by residues Val10, Asn13, Leu15, Glu17, Glu20, and Asp23. Intrachain disulfides connect Cys11–Cys30 and Cys24–Cys30.

Belongs to the venom metalloproteinase (M12B) family. P-III subfamily. P-IIIb sub-subfamily. In terms of assembly, monomer. Zn(2+) is required as a cofactor. In terms of processing, the N-terminus (from the N-terminal region of the metalloproteinase domain) is blocked. In terms of tissue distribution, expressed by the venom gland.

The protein localises to the secreted. With respect to regulation, the fibrinogenolytic and coagulant activities of the moojenin were abolished by preincubation with EDTA, 1,10-phenanthroline and beta-mercaptoethanol. Functionally, metalloproteinase moojenin: snake venom metalloproteinase that cleaves both alpha- and beta-chains of fibrinogen, but not the gamma-chain. Shows a coagulant activity on bovine plasma about 3.1 fold lower than crude venom. Renders the blood incoagulable when intraperitoneally administered into mice. Induces necrosis in liver and muscle, but does not cause histological alterations in mouse lungs, kidney or heart. The polypeptide is Zinc metalloproteinase-disintegrin-like moojenin (Bothrops moojeni (Lance-headed viper)).